The primary structure comprises 479 residues: Pyruvate kinase (479 aa).

Arginine 36 lines the substrate pocket. 3 residues coordinate K(+): asparagine 38, serine 40, and aspartate 70. Residue 38-41 (NFSH) coordinates ATP. 2 residues coordinate ATP: arginine 77 and lysine 160. Glutamate 225 is a binding site for Mg(2+). Residues glycine 251, aspartate 252, and threonine 284 each contribute to the substrate site. A Mg(2+)-binding site is contributed by aspartate 252.

Belongs to the pyruvate kinase family. Homotetramer. It depends on Mg(2+) as a cofactor. K(+) is required as a cofactor.

It carries out the reaction pyruvate + ATP = phosphoenolpyruvate + ADP + H(+). It participates in carbohydrate degradation; glycolysis; pyruvate from D-glyceraldehyde 3-phosphate: step 5/5. With respect to regulation, allosterically activated by AMP and by several sugar phosphates. Belongs to type II PK. In Buchnera aphidicola subsp. Baizongia pistaciae (strain Bp), this protein is Pyruvate kinase (pykA).